Consider the following 296-residue polypeptide: Ribosomal RNA small subunit methyltransferase A (296 aa).

Residues N30, L32, G57, E78, D103, and N128 each coordinate S-adenosyl-L-methionine.

The protein belongs to the class I-like SAM-binding methyltransferase superfamily. rRNA adenine N(6)-methyltransferase family. RsmA subfamily.

It is found in the cytoplasm. The catalysed reaction is adenosine(1518)/adenosine(1519) in 16S rRNA + 4 S-adenosyl-L-methionine = N(6)-dimethyladenosine(1518)/N(6)-dimethyladenosine(1519) in 16S rRNA + 4 S-adenosyl-L-homocysteine + 4 H(+). Its function is as follows. Specifically dimethylates two adjacent adenosines (A1518 and A1519) in the loop of a conserved hairpin near the 3'-end of 16S rRNA in the 30S particle. May play a critical role in biogenesis of 30S subunits. The polypeptide is Ribosomal RNA small subunit methyltransferase A (Staphylococcus haemolyticus (strain JCSC1435)).